The following is a 247-amino-acid chain: Large ribosomal subunit protein uL3 (247 aa).

Disordered regions lie at residues 124-145 and 218-247; these read RLGQ…PGSM and VGQE…ASAE. Positions 222 to 241 are enriched in basic and acidic residues; sequence VKAEAKDTASTEKKQAETKN.

Belongs to the universal ribosomal protein uL3 family. As to quaternary structure, part of the 50S ribosomal subunit. Forms a cluster with proteins L14 and L19.

In terms of biological role, one of the primary rRNA binding proteins, it binds directly near the 3'-end of the 23S rRNA, where it nucleates assembly of the 50S subunit. The protein is Large ribosomal subunit protein uL3 of Oenococcus oeni (strain ATCC BAA-331 / PSU-1).